The following is a 336-amino-acid chain: NADH-quinone oxidoreductase subunit H (336 aa).

8 helical membrane-spanning segments follow: residues 4 to 24 (YILW…LVVA), 75 to 95 (YLFF…WAVI), 108 to 128 (LGLL…VIAG), 154 to 174 (MGFA…TGII), 181 to 201 (IWHW…IAGI), 233 to 253 (LFFL…SIMF), 272 to 292 (FVPG…MFLW), and 308 to 328 (LGWK…ACMV).

The protein belongs to the complex I subunit 1 family. NDH-1 is composed of 14 different subunits. Subunits NuoA, H, J, K, L, M, N constitute the membrane sector of the complex.

The protein localises to the cell inner membrane. The catalysed reaction is a quinone + NADH + 5 H(+)(in) = a quinol + NAD(+) + 4 H(+)(out). Its function is as follows. NDH-1 shuttles electrons from NADH, via FMN and iron-sulfur (Fe-S) centers, to quinones in the respiratory chain. The immediate electron acceptor for the enzyme in this species is believed to be ubiquinone. Couples the redox reaction to proton translocation (for every two electrons transferred, four hydrogen ions are translocated across the cytoplasmic membrane), and thus conserves the redox energy in a proton gradient. This subunit may bind ubiquinone. The chain is NADH-quinone oxidoreductase subunit H from Francisella tularensis subsp. mediasiatica (strain FSC147).